A 517-amino-acid polypeptide reads, in one-letter code: Phenol 2-monooxygenase, oxygenase component DmpN (517 aa).

Glutamate 109, glutamate 139, histidine 142, glutamate 200, glutamate 234, and histidine 237 together coordinate Fe cation.

Belongs to the TmoA/XamoA family. In terms of assembly, the multicomponent enzyme phenol hydroxylase is formed by DmpL (P1 component), DmpM (P2 component), DmpN (P3 component), DmpO (P4 component) and DmpP (P5 component). The oxygenase component is a dimer composed of three subunits, DmpL, DmpN and DmpO (DmpLNO). DmpN interacts with the auxiliary protein DmpK (P0 component). The cofactor is Fe(2+).

It catalyses the reaction phenol + NADH + O2 + H(+) = catechol + NAD(+) + H2O. It functions in the pathway aromatic compound metabolism; phenol degradation. Its activity is regulated as follows. Requires DmpM for efficient turnover. The activity of DmpLNO oxygenase is inhibited by dithiothreitol (DTT) by a mechanism apparently involving H(2)O(2) generation. Its function is as follows. Part of a multicomponent enzyme which catalyzes the degradation of phenol and some of its methylated derivatives. DmpL, DmpN and DmpO form the oxygenase component of the complex. Required for growth on phenol and for in vitro phenol hydroxylase activity. In Pseudomonas sp. (strain CF600), this protein is Phenol 2-monooxygenase, oxygenase component DmpN.